Consider the following 592-residue polypeptide: Aspartate--tRNA(Asp/Asn) ligase (592 aa).

Glu-172 is a binding site for L-aspartate. Positions 196 to 199 (QLFK) are aspartate. An L-aspartate-binding site is contributed by Arg-218. Residues 218 to 220 (RDE) and Gln-227 each bind ATP. Position 450 (His-450) interacts with L-aspartate. Glu-484 contributes to the ATP binding site. Arg-491 is an L-aspartate binding site. 536–539 (GLDR) contacts ATP.

Belongs to the class-II aminoacyl-tRNA synthetase family. Type 1 subfamily. In terms of assembly, homodimer.

Its subcellular location is the cytoplasm. The catalysed reaction is tRNA(Asx) + L-aspartate + ATP = L-aspartyl-tRNA(Asx) + AMP + diphosphate. Functionally, aspartyl-tRNA synthetase with relaxed tRNA specificity since it is able to aspartylate not only its cognate tRNA(Asp) but also tRNA(Asn). Reaction proceeds in two steps: L-aspartate is first activated by ATP to form Asp-AMP and then transferred to the acceptor end of tRNA(Asp/Asn). The sequence is that of Aspartate--tRNA(Asp/Asn) ligase from Thioalkalivibrio sulfidiphilus (strain HL-EbGR7).